Reading from the N-terminus, the 225-residue chain is MAEQKYRYTLHAVVREEQGKGASRRLRRQGLVPAIIYGGNTEPQAIAIKQDELKKNAKNHSFFSQIINLKIDGQEDQEILVRDVQHHIYKPLFQHFDFQRIVRGQEITATVLLEFVGEERAPGIKTDGGIVSRHMTTVEVICRPSLLPEYIAVDLSEANIGDIITLADLKLPEGVRLVGDMEDEEFAATVVVQISYPQREEQMEDTDTAAADEEGDKEEDADKQE.

The segment at 197 to 225 (PQREEQMEDTDTAAADEEGDKEEDADKQE) is disordered. Over residues 202-225 (QMEDTDTAAADEEGDKEEDADKQE) the composition is skewed to acidic residues.

This sequence belongs to the bacterial ribosomal protein bL25 family. CTC subfamily. Part of the 50S ribosomal subunit; part of the 5S rRNA/L5/L18/L25 subcomplex. Contacts the 5S rRNA. Binds to the 5S rRNA independently of L5 and L18.

In terms of biological role, this is one of the proteins that binds to the 5S RNA in the ribosome where it forms part of the central protuberance. The polypeptide is Large ribosomal subunit protein bL25 (Dichelobacter nodosus (strain VCS1703A)).